The chain runs to 365 residues: Validamycin A dioxygenase (365 aa).

Residues 174–284 (HATWTQSVNW…LVSLVYFFDA (111 aa)) enclose the Fe2OG dioxygenase domain. H203, D205, and H261 together coordinate Fe cation. The disordered stretch occupies residues 331–365 (GELSLSRPGSADSPGSSPADDHPSRPGRHPAQGPQ). Positions 336–348 (SRPGSADSPGSSP) are enriched in low complexity.

This sequence belongs to the iron/ascorbate-dependent oxidoreductase family. It depends on Fe(2+) as a cofactor.

The enzyme catalyses validamycin A + 2-oxoglutarate + O2 = validamycin B + succinate + CO2 + H(+). The catalysed reaction is validoxylamine A + 2-oxoglutarate + O2 = validoxylamine B + succinate + CO2 + H(+). It functions in the pathway antibiotic biosynthesis. Involved in the biosynthesis of validamycin B, a component of the antifungal and antibiotic validamycin complex used as a crop protectant. Catalyzes the regioselective hydroxylation of validamycin A (4-O-beta-D-glucopyranosyl-validoxylamine A) at the C-6 position to yield validamycin B. To a lesser extent, also able to convert validoxylamine A to its hydroxylated derivative. The sequence is that of Validamycin A dioxygenase from Streptomyces hygroscopicus subsp. limoneus.